A 180-amino-acid chain; its full sequence is Stathmin-3 (180 aa).

2 S-palmitoyl cysteine lipidation sites follow: Cys22 and Cys24. The SLD domain maps to 38–180; the sequence is GDMEVKQLDK…NKEQREEMSG (143 aa). Phosphoserine occurs at positions 50, 60, 65, 68, 72, 73, and 81. The tract at residues 58–82 is disordered; that stretch reads LKSPSDLSPESPMLSSPPKRKDTSL. The segment covering 60–74 has biased composition (low complexity); the sequence is SPSDLSPESPMLSSP. Residues 76-179 are a coiled coil; it reads KRKDTSLEEL…RNKEQREEMS (104 aa).

The protein belongs to the stathmin family. Interacts with STAT3. Interacts with CLU (secreted form); this interaction may act as an important modulator during neuronal differentiation. N-terminal palmitoylation promotes specific anchoring to the cytosolic leaflet of Golgi membranes and subsequent vesicular trafficking along dendrites and axons. Neuronal Stathmins are substrates for palmitoyltransferases ZDHHC3, ZDHHC7 and ZDHHC15.

The protein localises to the golgi apparatus. Its subcellular location is the cell projection. It localises to the growth cone. The protein resides in the axon. It is found in the cytoplasm. The protein localises to the cytosol. In terms of biological role, exhibits microtubule-destabilizing activity, which is antagonized by STAT3. In Bos taurus (Bovine), this protein is Stathmin-3 (STMN3).